The sequence spans 198 residues: Putative 3-methyladenine DNA glycosylase (198 aa).

Belongs to the DNA glycosylase MPG family.

This is Putative 3-methyladenine DNA glycosylase from Oceanobacillus iheyensis (strain DSM 14371 / CIP 107618 / JCM 11309 / KCTC 3954 / HTE831).